The chain runs to 371 residues: Enterobactin C-glucosyltransferase (371 aa).

Belongs to the glycosyltransferase 28 family.

The protein resides in the cytoplasm. It carries out the reaction enterobactin + UDP-alpha-D-glucose = monoglucosyl-enterobactin + UDP. The catalysed reaction is monoglucosyl-enterobactin + UDP-alpha-D-glucose = diglucosyl-enterobactin + UDP + H(+). The enzyme catalyses diglucosyl-enterobactin + UDP-alpha-D-glucose = triglucosyl-enterobactin + UDP + H(+). Its pathway is siderophore biosynthesis; enterobactin biosynthesis. Functionally, catalyzes the successive monoglucosylation, diglucosylation and triglucosylation of enterobactin (Ent). Transfers glucosyl groups from uridine-5'-diphosphoglucose (UDP-Glc) to C5 of one, two or three of the 2,3-dihydroxybenzoyl (DHB) units of Ent to yield monoglucosyl-C-Ent (MGE), diglucosyl-C-Ent (DGE) and triglucosyl-C-Ent (TGE). Glucosylation decreases the membrane affinity of Ent and increases the iron acquisition rate. In Escherichia coli O6:H1 (strain CFT073 / ATCC 700928 / UPEC), this protein is Enterobactin C-glucosyltransferase.